The following is a 661-amino-acid chain: mRNA 3'-end-processing protein RNA14 (661 aa).

The disordered stretch occupies residues 1–37 (MSGNETPDAGTVKSVSPSSGGSSLPARPTLRERDPND). Low complexity predominate over residues 14–23 (SVSPSSGGSS). HAT repeat units follow at residues 67–99 (QQVAEIREVFGQLHELFPLESFLWTIHLNWELE), 101–135 (EESGQVETLLAKCLSGELMNNDIYLWSTYLGYVRR), 149–181 (TVLKAYELVMEKCAVFEPRSMQFWQDYLQFLEQ), 192–225 (SRVEILRKLYKRLLCLPVESLERYWEKYTQWEQE), 262–298 (SLPTKLNQATQQNLPAPGQYDEYQLQIWTKWIQWELD), 307–339 (VLRQRVEYVHRQAVQHMCFAPEIWYNYAMFVDE), and 513–548 (YNLDQLKEIYKKVINYESKFGNLNNVYELERRFFEK).

The protein resides in the nucleus. Its subcellular location is the cytoplasm. Component of the cleavage factor IA (CFIA) complex, which is involved in the endonucleolytic cleavage during polyadenylation-dependent pre-mRNA 3'-end formation. The polypeptide is mRNA 3'-end-processing protein RNA14 (RNA14) (Eremothecium gossypii (strain ATCC 10895 / CBS 109.51 / FGSC 9923 / NRRL Y-1056) (Yeast)).